The primary structure comprises 1043 residues: MPLLEGPVGVEDLILLEPLDEESLIKNLQLRYENKEIYTYIGNVVISMNPYEQLPIYGPEFIAKYRDYTFYELKPHIYALANVAYQSLKDRDRDQCILITGESGAGKTEASKLVMSYVAAVCGKGEQVNSVKEQLLQSNPVLEAFGNAKTIRNNNSSRFGKYMDIEFDFKGSPLGGVITNYLLEKSRVVKQLKGERNFHIFYQLLAGADAQLLKALKLEEDTSVYGYLNGEVSKVNGMDDASNFRAVQHAMSVIGFSEEEIRQVLEVTALVLKLGNVKLTDEFQANGIPASGICDGKGIQEIGEMMGLNSTELERALCSRTMETGKEKVVTVLNVTQAQYARDALAKNIYSRLFDWIVKRINESIKVGTGEKKKVMGVLDIYGFEILEDNSFEQFVINYCNERLQQVFIELTLKEEQEEYKREGIPWTKVEYFDNGIICNLIEHSQRGILAMLDEECLRPGVVSDSTFLAKLNQLFSKHSHYESKVSQNAQRQYDRTMGLSCFRISHYAGKVTYNVTGFIDKNNDLLFRDLSQTMWKAQHPLLKSLFPEGNPKEASLKRPPTAGTQFKNSVAVLMKNLYSKNPNYIRCIKPNDQQQKGRFTSEMVMVQARYLGLLENVRVRRAGYAFRQGYKPFLERYRLLSRSTWPRWNGDDREGVEKVLGSLTLSSEELAYGKTKIFIRSPKTLFYLEEQRRLRLQQLATLIQKVYRGWRCRTHYQQMRKSQILISAWFRGNKQKKHYGKIRSSVLLIQAFVRGWRARKNYRKYFRSGAALTLANFIYQSMAQKFLLNLKKNLPSTKVLDNTWPAAPYRCFNTANQELQRLFYQWKCKKFRDQLSPKQVQTLREKLCASELFKGKKASYPQSVPIPFRGDYIGLQGNPKLQRLKGREEGPVLVADTVKKVNRGNGKTSARILLLTKGHVILTDAKKSQAQIVIGLEDVAGVSVSSLQDGLFSLHLSEMSSAVSKGDILLVSDHVVELLTKMYQAVLDATQRQLSVTVTEKFSVRFKEGSVAVKVIQGPEGGGNRKLICKKKGSNAMEVTVR.

The 687-residue stretch at 8-694 (VGVEDLILLE…TLFYLEEQRR (687 aa)) folds into the Myosin motor domain. 101–108 (GESGAGKT) contacts ATP. The segment at 571-593 (VAVLMKNLYSKNPNYIRCIKPND) is actin-binding. IQ domains lie at 697–719 (LQQL…HYQQ), 720–742 (MRKS…HYGK), and 743–772 (IRSS…SGAA). Residues 858–1042 (KASYPQSVPI…KGSNAMEVTV (185 aa)) form the TH1 domain.

Belongs to the TRAFAC class myosin-kinesin ATPase superfamily. Myosin family. Phosphorylated by ALPK1.

Functionally, involved in directing the movement of organelles along actin filaments. This chain is Unconventional myosin-Ia (Myo1a), found in Mus musculus (Mouse).